The primary structure comprises 376 residues: PqqA peptide cyclase (376 aa).

The 216-residue stretch at 4–219 (VPPPLSVLLE…VETARRSLGD (216 aa)) folds into the Radical SAM core domain. Residues C18, C22, and C25 each coordinate [4Fe-4S] cluster.

Belongs to the radical SAM superfamily. PqqE family. As to quaternary structure, interacts with PqqD. The interaction is necessary for activity of PqqE. It depends on [4Fe-4S] cluster as a cofactor.

The catalysed reaction is [PQQ precursor protein] + S-adenosyl-L-methionine = E-Y cross-linked-[PQQ precursor protein] + 5'-deoxyadenosine + L-methionine + H(+). It participates in cofactor biosynthesis; pyrroloquinoline quinone biosynthesis. Its function is as follows. Catalyzes the cross-linking of a glutamate residue and a tyrosine residue in the PqqA protein as part of the biosynthesis of pyrroloquinoline quinone (PQQ). This is PqqA peptide cyclase from Xanthomonas campestris pv. campestris (strain 8004).